A 362-amino-acid chain; its full sequence is Phosphoserine aminotransferase (362 aa).

Residue Arg43 participates in L-glutamate binding. Residues 77-78 (AR), Trp103, Thr153, Asp173, and Gln196 contribute to the pyridoxal 5'-phosphate site. Lys197 bears the N6-(pyridoxal phosphate)lysine mark.

It belongs to the class-V pyridoxal-phosphate-dependent aminotransferase family. SerC subfamily. In terms of assembly, homodimer. It depends on pyridoxal 5'-phosphate as a cofactor.

It localises to the cytoplasm. The catalysed reaction is O-phospho-L-serine + 2-oxoglutarate = 3-phosphooxypyruvate + L-glutamate. It carries out the reaction 4-(phosphooxy)-L-threonine + 2-oxoglutarate = (R)-3-hydroxy-2-oxo-4-phosphooxybutanoate + L-glutamate. It participates in amino-acid biosynthesis; L-serine biosynthesis; L-serine from 3-phospho-D-glycerate: step 2/3. It functions in the pathway cofactor biosynthesis; pyridoxine 5'-phosphate biosynthesis; pyridoxine 5'-phosphate from D-erythrose 4-phosphate: step 3/5. In terms of biological role, catalyzes the reversible conversion of 3-phosphohydroxypyruvate to phosphoserine and of 3-hydroxy-2-oxo-4-phosphonooxybutanoate to phosphohydroxythreonine. This chain is Phosphoserine aminotransferase, found in Legionella pneumophila (strain Lens).